A 360-amino-acid chain; its full sequence is Iron uptake protein A1 (360 aa).

Residues 1-28 (MVQKLSRRLFLSIGTAFTVVVGSQLLSS) form the signal peptide. Cysteine 29 carries N-palmitoyl cysteine lipidation. The S-diacylglycerol cysteine moiety is linked to residue cysteine 29. Residues histidine 54, tyrosine 55, tyrosine 185, tyrosine 241, and tyrosine 242 each contribute to the Fe cation site.

It belongs to the bacterial solute-binding protein 1 family.

It is found in the cellular thylakoid membrane. It localises to the cell membrane. Functionally, plays an important role in protecting the acceptor side of photosystem II (PSII) against oxidative damage, especially under iron-limiting growth conditions. The differing subcellular locations of futA1 (predominantly thylakoid lumen) and futA2 (predominantly periplasmic) suggest they may fulfill different roles. A major iron-binding protein involved in Fe(3+) uptake, probably part of a periplasmic ABC transporter complex futA1A2BC (TC 3.A.1.10.2) involved in Fe(3+) ion import (ferric iron). This protein and futA2 (slr0531) may be subunit proteins that have redundant or overlapping substrate-binding functions. This chain is Iron uptake protein A1 (futA1), found in Synechocystis sp. (strain ATCC 27184 / PCC 6803 / Kazusa).